Here is a 396-residue protein sequence, read N- to C-terminus: Serine/threonine-protein kinase 32A (396 aa).

Residue glycine 2 is the site of N-myristoyl glycine attachment. In terms of domain architecture, Protein kinase spans 23 to 281 (FEILRAIGKG…LSDVQNFPYM (259 aa)). ATP-binding positions include 29-37 (IGKGSFGKV) and lysine 52. Residue aspartate 146 is the Proton acceptor of the active site. The segment at 373–396 (KRQPNLALEQTKDPQGEDGQNNNL) is disordered.

This sequence belongs to the protein kinase superfamily. Ser/Thr protein kinase family. Requires Mg(2+) as cofactor.

Its subcellular location is the cell membrane. The enzyme catalyses L-seryl-[protein] + ATP = O-phospho-L-seryl-[protein] + ADP + H(+). The catalysed reaction is L-threonyl-[protein] + ATP = O-phospho-L-threonyl-[protein] + ADP + H(+). This Homo sapiens (Human) protein is Serine/threonine-protein kinase 32A (STK32A).